A 1878-amino-acid chain; its full sequence is DNA polymerase (1878 aa).

2 disordered regions span residues 691-727 (LFQA…KGPN) and 1839-1878 (TQDD…GTMF). Over residues 694–709 (ADDDDDDDDEDEDDGL) the composition is skewed to acidic residues. Positions 710-723 (LDERQQDSAEDMKK) are enriched in basic and acidic residues. The span at 1868–1878 (ITAGKTAGTMF) shows a compositional bias: low complexity.

The protein belongs to the DNA polymerase type-B family.

The catalysed reaction is DNA(n) + a 2'-deoxyribonucleoside 5'-triphosphate = DNA(n+1) + diphosphate. In Magallana gigas (Pacific oyster), this protein is DNA polymerase.